Reading from the N-terminus, the 328-residue chain is Malate dehydrogenase (328 aa).

NAD(+) is bound at residue 11 to 17; the sequence is GAAGQIG. Substrate is bound by residues R94 and R100. NAD(+)-binding positions include N107, Q114, and 131–133; that span reads VGN. 2 residues coordinate substrate: N133 and R164. H189 functions as the Proton acceptor in the catalytic mechanism.

This sequence belongs to the LDH/MDH superfamily. MDH type 2 family.

It carries out the reaction (S)-malate + NAD(+) = oxaloacetate + NADH + H(+). Catalyzes the reversible oxidation of malate to oxaloacetate. The chain is Malate dehydrogenase from Stenotrophomonas maltophilia (strain K279a).